The sequence spans 201 residues: Probable nicotinate-nucleotide adenylyltransferase (201 aa).

The protein belongs to the NadD family.

It carries out the reaction nicotinate beta-D-ribonucleotide + ATP + H(+) = deamido-NAD(+) + diphosphate. It functions in the pathway cofactor biosynthesis; NAD(+) biosynthesis; deamido-NAD(+) from nicotinate D-ribonucleotide: step 1/1. Functionally, catalyzes the reversible adenylation of nicotinate mononucleotide (NaMN) to nicotinic acid adenine dinucleotide (NaAD). The sequence is that of Probable nicotinate-nucleotide adenylyltransferase from Neisseria gonorrhoeae (strain ATCC 700825 / FA 1090).